A 334-amino-acid polypeptide reads, in one-letter code: Adenosine deaminase (334 aa).

2 residues coordinate Zn(2+): His-12 and His-14. Substrate-binding residues include His-14, Asp-16, and Gly-170. His-197 contacts Zn(2+). Catalysis depends on Glu-200, which acts as the Proton donor. Asp-278 contacts Zn(2+). Residue Asp-279 coordinates substrate.

The protein belongs to the metallo-dependent hydrolases superfamily. Adenosine and AMP deaminases family. Adenosine deaminase subfamily. Zn(2+) is required as a cofactor.

It carries out the reaction adenosine + H2O + H(+) = inosine + NH4(+). The enzyme catalyses 2'-deoxyadenosine + H2O + H(+) = 2'-deoxyinosine + NH4(+). Functionally, catalyzes the hydrolytic deamination of adenosine and 2-deoxyadenosine. This is Adenosine deaminase from Yersinia pseudotuberculosis serotype IB (strain PB1/+).